The primary structure comprises 277 residues: Uridine-cytidine kinase 1 (277 aa).

The segment at 1–30 (MASAGGEDCESPAPEADRPHQRPFLIGVSG) is disordered. 30–38 (GGTASGKST) contacts ATP. Asp65 is an active-site residue. Substrate-binding residues include Asp87, Tyr115, His120, Arg169, Arg178, and Gln186. Asp215 lines the ATP pocket. The tract at residues 247–277 (SYKRTFSEPGDHPGMLTSGKRSHLESSSRPH) is disordered. Residue Thr251 is modified to Phosphothreonine. Residue Ser253 is modified to Phosphoserine. Basic and acidic residues predominate over residues 268–277 (SHLESSSRPH).

The protein belongs to the uridine kinase family. Ubiquitous.

It carries out the reaction uridine + ATP = UMP + ADP + H(+). The catalysed reaction is cytidine + ATP = CMP + ADP + H(+). The protein operates within pyrimidine metabolism; CTP biosynthesis via salvage pathway; CTP from cytidine: step 1/3. It participates in pyrimidine metabolism; UMP biosynthesis via salvage pathway; UMP from uridine: step 1/1. Phosphorylates uridine and cytidine to uridine monophosphate and cytidine monophosphate. Does not phosphorylate deoxyribonucleosides or purine ribonucleosides. Can use ATP or GTP as a phosphate donor. Can also phosphorylate cytidine and uridine nucleoside analogs such as 6-azauridine, 5-fluorouridine, 4-thiouridine, 5-bromouridine, N(4)-acetylcytidine, N(4)-benzoylcytidine, 5-fluorocytidine, 2-thiocytidine, 5-methylcytidine, and N(4)-anisoylcytidine. The polypeptide is Uridine-cytidine kinase 1 (UCK1) (Homo sapiens (Human)).